The chain runs to 92 residues: Neurophysin 2 (92 aa).

Disulfide bonds link Cys-7–Cys-51, Cys-10–Cys-24, Cys-18–Cys-41, Cys-25–Cys-31, Cys-58–Cys-70, Cys-64–Cys-82, and Cys-71–Cys-76.

This sequence belongs to the vasopressin/oxytocin family.

It localises to the secreted. Neurophysin 2 specifically binds the midbrain peptide hormone vasopressin. This is Neurophysin 2 (AVP) from Equus caballus (Horse).